The sequence spans 323 residues: Transposase for insertion sequence element IS6120 (323 aa).

The tract at residues 300–323 (ERPTDITPPTSPSDGGQHAGTEVA) is disordered. The span at 304 to 313 (DITPPTSPSD) shows a compositional bias: low complexity.

This sequence belongs to the transposase mutator family.

Required for the transposition of the insertion element. This is Transposase for insertion sequence element IS6120 from Mycolicibacterium smegmatis (Mycobacterium smegmatis).